Here is a 229-residue protein sequence, read N- to C-terminus: Potassium/proton antiporter CemA (229 aa).

Helical transmembrane passes span 6-26 (AFIP…ISLC), 107-127 (ILHF…SFWA), and 189-209 (ILSG…KYWI).

The protein belongs to the CemA family.

It is found in the plastid. The protein localises to the chloroplast inner membrane. It carries out the reaction K(+)(in) + H(+)(out) = K(+)(out) + H(+)(in). In terms of biological role, contributes to K(+)/H(+) antiport activity by supporting proton efflux to control proton extrusion and homeostasis in chloroplasts in a light-dependent manner to modulate photosynthesis. Prevents excessive induction of non-photochemical quenching (NPQ) under continuous-light conditions. Indirectly promotes efficient inorganic carbon uptake into chloroplasts. In Crucihimalaya wallichii (Rock-cress), this protein is Potassium/proton antiporter CemA.